The following is a 227-amino-acid chain: MLLRLPPVFLTVLIAIASCSVYILNIAIESGFADSPYNFNQTTVGLAYMSTGIGYILSSMAGGRWMDSIMAREARKVVRSDSHGKLISLPEDHMKENAWVANTLYPLSSLWFGWTMYYGVQFMVPISALFVFGFTLMLHFTLGTTMLTEFVRKRSSAGVTVNNFVRNILSCVGTIVAAPWMKGVGLRYMMTKLCIICLLLGSLGIWLITRNAQRWRGTLDKALKEMD.

Residues 8–28 (VFLTVLIAIASCSVYILNIAI) form a helical membrane-spanning segment. N-linked (GlcNAc...) asparagine glycosylation is present at N40. A run of 5 helical transmembrane segments spans residues 43–63 (TVGL…MAGG), 100–120 (VANT…YYGV), 122–142 (FMVP…HFTL), 164–181 (FVRN…APWM), and 188–208 (YMMT…IWLI).

The protein belongs to the major facilitator superfamily.

It is found in the membrane. Functionally, MFS-type transporter; part of the Fusarium detoxification of benzoxazolinone cluster 1 (FDB1) involved in the degradation of benzoxazolinones produced by the host plant. Maize, wheat, and rye produce the 2 benzoxazinone phytoanticipins 2,4-dihy-droxy-7-methoxy-1,4-benzoxazin-3-one (DIMBOA) and 2,4-dihydroxy-1,4-benzoxazin-3-one (DIBOA) that, due to their inherent instability once released, spontaneously degrade to the more stable corresponding benzoxazolinones, 6-methoxy-2-benzoxazolinone (MBOA) and 2-benzoxazolinone (BOA), respectively. This Gibberella moniliformis (strain M3125 / FGSC 7600) (Maize ear and stalk rot fungus) protein is MFS-type transporter FVEG_08288.